We begin with the raw amino-acid sequence, 202 residues long: Imidazoleglycerol-phosphate dehydratase (202 aa).

It belongs to the imidazoleglycerol-phosphate dehydratase family.

It is found in the cytoplasm. It catalyses the reaction D-erythro-1-(imidazol-4-yl)glycerol 3-phosphate = 3-(imidazol-4-yl)-2-oxopropyl phosphate + H2O. It participates in amino-acid biosynthesis; L-histidine biosynthesis; L-histidine from 5-phospho-alpha-D-ribose 1-diphosphate: step 6/9. This chain is Imidazoleglycerol-phosphate dehydratase, found in Rhodopirellula baltica (strain DSM 10527 / NCIMB 13988 / SH1).